The following is a 2894-amino-acid chain: Bifunctional DNA-directed RNA polymerase subunit beta-beta' (2894 aa).

Residues 1-1378 (MANFTKLKNR…DVNIYGDEQD (1378 aa)) are DNA-directed RNA polymerase subunit beta. The interval 1385-2894 (PIAIKEDERP…QEEYEEDEEE (1510 aa)) is DNA-directed RNA polymerase subunit beta'. Cys1450, Cys1452, Cys1465, and Cys1468 together coordinate Zn(2+). The Mg(2+) site is built by Asp1849, Asp1851, and Asp1853. 4 residues coordinate Zn(2+): Cys2179, Cys2253, Cys2260, and Cys2263.

It in the N-terminal section; belongs to the RNA polymerase beta chain family. This sequence in the C-terminal section; belongs to the RNA polymerase beta' chain family. The RNAP catalytic core consists of 2 alpha, 1 beta/beta' and 1 omega subunit. When a sigma factor is associated with the core the holoenzyme is formed, which can initiate transcription. Mg(2+) serves as cofactor. The cofactor is Zn(2+).

It catalyses the reaction RNA(n) + a ribonucleoside 5'-triphosphate = RNA(n+1) + diphosphate. Functionally, DNA-dependent RNA polymerase catalyzes the transcription of DNA into RNA using the four ribonucleoside triphosphates as substrates. In Helicobacter hepaticus (strain ATCC 51449 / 3B1), this protein is Bifunctional DNA-directed RNA polymerase subunit beta-beta' (rpoBC).